Consider the following 314-residue polypeptide: 4-hydroxy-3-methylbut-2-enyl diphosphate reductase (314 aa).

Residue Cys-12 participates in [4Fe-4S] cluster binding. His-43 and His-81 together coordinate (2E)-4-hydroxy-3-methylbut-2-enyl diphosphate. Dimethylallyl diphosphate contacts are provided by His-43 and His-81. Isopentenyl diphosphate contacts are provided by His-43 and His-81. [4Fe-4S] cluster is bound at residue Cys-103. His-131 provides a ligand contact to (2E)-4-hydroxy-3-methylbut-2-enyl diphosphate. A dimethylallyl diphosphate-binding site is contributed by His-131. His-131 contributes to the isopentenyl diphosphate binding site. The Proton donor role is filled by Glu-133. Thr-170 contributes to the (2E)-4-hydroxy-3-methylbut-2-enyl diphosphate binding site. A [4Fe-4S] cluster-binding site is contributed by Cys-198. 3 residues coordinate (2E)-4-hydroxy-3-methylbut-2-enyl diphosphate: Ser-226, Asn-228, and Ser-271. Residues Ser-226, Asn-228, and Ser-271 each coordinate dimethylallyl diphosphate. The isopentenyl diphosphate site is built by Ser-226, Asn-228, and Ser-271.

Belongs to the IspH family. The cofactor is [4Fe-4S] cluster.

It catalyses the reaction isopentenyl diphosphate + 2 oxidized [2Fe-2S]-[ferredoxin] + H2O = (2E)-4-hydroxy-3-methylbut-2-enyl diphosphate + 2 reduced [2Fe-2S]-[ferredoxin] + 2 H(+). The enzyme catalyses dimethylallyl diphosphate + 2 oxidized [2Fe-2S]-[ferredoxin] + H2O = (2E)-4-hydroxy-3-methylbut-2-enyl diphosphate + 2 reduced [2Fe-2S]-[ferredoxin] + 2 H(+). Its pathway is isoprenoid biosynthesis; dimethylallyl diphosphate biosynthesis; dimethylallyl diphosphate from (2E)-4-hydroxy-3-methylbutenyl diphosphate: step 1/1. It participates in isoprenoid biosynthesis; isopentenyl diphosphate biosynthesis via DXP pathway; isopentenyl diphosphate from 1-deoxy-D-xylulose 5-phosphate: step 6/6. Catalyzes the conversion of 1-hydroxy-2-methyl-2-(E)-butenyl 4-diphosphate (HMBPP) into a mixture of isopentenyl diphosphate (IPP) and dimethylallyl diphosphate (DMAPP). Acts in the terminal step of the DOXP/MEP pathway for isoprenoid precursor biosynthesis. The polypeptide is 4-hydroxy-3-methylbut-2-enyl diphosphate reductase (Bacillus velezensis (strain DSM 23117 / BGSC 10A6 / LMG 26770 / FZB42) (Bacillus amyloliquefaciens subsp. plantarum)).